Consider the following 532-residue polypeptide: uncharacterized protein (532 aa).

3 disordered regions span residues 26 to 84, 97 to 129, and 157 to 470; these read KALR…TDSE, VFDESVSSDTDSEESHEEKRILPLGTPGQQVGR, and SKAA…HTCQ. Positions 30–40 are enriched in low complexity; the sequence is GNNNGSSTSGG. The span at 67–80 shows a compositional bias: polar residues; it reads DIISQARRQVSLSR. Basic and acidic residues predominate over residues 157–181; that stretch reads SKAAGEESKRHAHFESIQEEEKISE. Residues 198 to 213 show a composition bias toward low complexity; that stretch reads IQSGSESSDSDSIIFD. A compositionally biased stretch (basic and acidic residues) spans 237-249; that stretch reads VEKKIEKPAVKEQ. Low complexity-rich tracts occupy residues 259-290, 298-315, and 326-335; these read PTPTESSFESSSDSSSTSESSTSSESSSSASE, ESQVSSSKTSTSKASSSK, and SSSSSASTIS. Residues 347-356 show a composition bias toward basic residues; that stretch reads KTKKPDKKRA. Composition is skewed to basic and acidic residues over residues 357–368, 389–403, 410–419, and 437–448; these read KPDDIRQNKKPE, STVRETNRTLEESLK, KSSEKMEKPR, and RDAEREQDIERR. The segment covering 449–461 has biased composition (basic residues); the sequence is REKRARRFRSRRR.

This is an uncharacterized protein from Caenorhabditis elegans.